The chain runs to 190 residues: Potassium-transporting ATPase KdpC subunit (190 aa).

Residues 10-30 form a helical membrane-spanning segment; it reads TFLFLLLITGGVYPLLTTALG.

Belongs to the KdpC family. As to quaternary structure, the system is composed of three essential subunits: KdpA, KdpB and KdpC.

It is found in the cell inner membrane. Its function is as follows. Part of the high-affinity ATP-driven potassium transport (or Kdp) system, which catalyzes the hydrolysis of ATP coupled with the electrogenic transport of potassium into the cytoplasm. This subunit acts as a catalytic chaperone that increases the ATP-binding affinity of the ATP-hydrolyzing subunit KdpB by the formation of a transient KdpB/KdpC/ATP ternary complex. The protein is Potassium-transporting ATPase KdpC subunit of Escherichia coli (strain SMS-3-5 / SECEC).